The primary structure comprises 516 residues: Glycosyltransferase-like protein gnt15 (516 aa).

Residues 1-24 are Cytoplasmic-facing; the sequence is MSNFYNNNPRRNTFRLTERIKKKP. The chain crosses the membrane as a helical; Signal-anchor for type II membrane protein span at residues 25–45; it reads YQTLIVFILIFLFLYVFGPFG. Topologically, residues 46–516 are extracellular; that stretch reads EKKSNNNNNN…NDNCLTREHW (471 aa). A glycan (N-linked (GlcNAc...) asparagine) is linked at Asn-152. A disordered region spans residues 199-250; that stretch reads DTSNNNNNNNNNNNNNNNNNNNNNNNNNNNNNNNENNDNDNGNNNNNNDNEK. The segment covering 202–246 has biased composition (low complexity); sequence NNNNNNNNNNNNNNNNNNNNNNNNNNNNNNNENNDNDNGNNNNNN. N-linked (GlcNAc...) asparagine glycans are attached at residues Asn-386 and Asn-412.

The protein belongs to the glycosyltransferase 8 family. Highly divergent.

It is found in the membrane. In terms of biological role, may have a role in modulating cell adhesion and glycosylation. Essential for development. The sequence is that of Glycosyltransferase-like protein gnt15 (gnt15) from Dictyostelium discoideum (Social amoeba).